A 108-amino-acid chain; its full sequence is MYMSRMKKKQKNIIKDVASERIERLFKLAAEEYSSNPGRSDRYVHLARRIGMKYRIRFPSPLKRKMCRGCSSYLVPGSSSRVRLHGRYMTITCLKCGREMRIPYHLKE.

Positions 67, 70, 93, and 96 each coordinate Zn(2+).

This sequence belongs to the eukaryotic/archaeal RNase P protein component 4 family. Consists of a catalytic RNA component and at least 4-5 protein subunits. Requires Zn(2+) as cofactor.

It is found in the cytoplasm. The enzyme catalyses Endonucleolytic cleavage of RNA, removing 5'-extranucleotides from tRNA precursor.. Part of ribonuclease P, a protein complex that generates mature tRNA molecules by cleaving their 5'-ends. The protein is Ribonuclease P protein component 4 of Methanococcoides burtonii (strain DSM 6242 / NBRC 107633 / OCM 468 / ACE-M).